The following is an 842-amino-acid chain: Pentatricopeptide repeat-containing protein At3g22690 (842 aa).

PPR repeat units lie at residues 98-132 (TCFM…GISP), 133-167 (DKYT…GYAK), 168-202 (DLFV…NVVS), 203-234 (WTSM…EVTP), 235-269 (NSVT…GIEV), 270-300 (NDLM…YGAS), 301-335 (NLDL…GVRP), 336-370 (DRIS…GFES), 371-401 (WDNI…MSNK), 402-436 (TVVT…NIVS), 437-463 (WNTI…MQSQ), 469-503 (DGVT…GIQL), 504-534 (DVRL…LTNR), 535-569 (DVSA…GLKP), 570-605 (DGVA…GVSP), and 606-636 (EDVH…MPME). The tract at residues 641 to 716 (IWNSLLAACR…PPGTSSIQIR (76 aa)) is type E motif. The type E(+) motif stretch occupies residues 717–747 (GKTHEFTSGDESHPEMPNIEAMLDEVSQRAS). The interval 748–842 (HLGHVPDLSN…QGKCSCGDFW (95 aa)) is type DYW motif.

It belongs to the PPR family. PCMP-H subfamily.

The protein is Pentatricopeptide repeat-containing protein At3g22690 (PCMP-H56) of Arabidopsis thaliana (Mouse-ear cress).